A 665-amino-acid polypeptide reads, in one-letter code: Envelope glycoprotein (665 aa).

Residues 1–31 (MESTTLSKPFKNQVNPWGPLIVLLILGRVNP) form the signal peptide. The interval 32-267 (VALGNSPHQV…KITDSGPRVP (236 aa)) is receptor-binding domain (RBD). The Extracellular segment spans residues 32–605 (VALGNSPHQV…FNGSPWFTTL (574 aa)). Residue Asn43 is glycosylated (N-linked (GlcNAc...) asparagine; by host). Cystine bridges form between Cys77-Cys129, Cys103-Cys118, Cys104-Cys114, Cys152-Cys172, and Cys164-Cys177. Residue Asp117 coordinates Zn(2+). Asn199 and Asn211 each carry an N-linked (GlcNAc...) asparagine; by host glycan. An intrachain disulfide couples Cys209 to Cys215. The segment at 266–307 (VPIGPNPVLSDQRPPSQPRSPPHSNSTPTETPLTLPEPPPAG) is disordered. N-linked (GlcNAc...) asparagine; by host glycosylation occurs at Asn324. Cystine bridges form between Cys334–Cys337, Cys334–Cys558, Cys364–Cys418, Cys383–Cys395, Cys425–Cys438, and Cys550–Cys557. The short motif at 334 to 337 (CWLC) is the CXXC element. 2 N-linked (GlcNAc...) asparagine; by host glycosylation sites follow: Asn356 and Asn363. Residues Asn396, Asn400, and Asn432 are each glycosylated (N-linked (GlcNAc...) asparagine; by host). Residues 470 to 490 (VSLTLALLLGGLTMGGIAAGI) are fusion peptide. Residues 505-532 (AAVHDDLKEVEKSITNLEKSLTSLSEVV) adopt a coiled-coil conformation. An immunosuppression region spans residues 533–549 (LQNRRGLDLLFLKEGGL). A CX6CC motif is present at residues 550–558 (CAALKEECC). A helical transmembrane segment spans residues 606–626 (ISTIMGPLIVLLLILLLGPCI). A lipid anchor (S-palmitoyl cysteine; by host) is attached at Cys625. At 627 to 665 (LNRLVQFVKDRISVVQALVLTQQYHQLKSIDPEEMESRE) the chain is on the cytoplasmic side. The YXXL motif; contains endocytosis signal signature appears at 650-653 (YHQL).

In terms of assembly, the mature envelope protein (Env) consists of a trimer of SU-TM heterodimers attached by a labile interchain disulfide bond. Post-translationally, specific enzymatic cleavages in vivo yield mature proteins. Envelope glycoproteins are synthesized as an inactive precursor that is N-glycosylated and processed likely by host cell furin or by a furin-like protease in the Golgi to yield the mature SU and TM proteins. The cleavage site between SU and TM requires the minimal sequence [KR]-X-[KR]-R. The R-peptide is released from the C-terminus of the cytoplasmic tail of the TM protein upon particle formation as a result of proteolytic cleavage by the viral protease. Cleavage of this peptide is required for TM to become fusogenic. In terms of processing, the CXXC motif is highly conserved across a broad range of retroviral envelope proteins. It is thought to participate in the formation of a labile disulfide bond possibly with the CX6CC motif present in the transmembrane protein. Isomerization of the intersubunit disulfide bond to an SU intrachain disulfide bond is thought to occur upon receptor recognition in order to allow membrane fusion. The transmembrane protein is palmitoylated. Post-translationally, the R-peptide is palmitoylated.

It is found in the virion membrane. The protein resides in the host cell membrane. In terms of biological role, the surface protein (SU) attaches the virus to the host cell by binding to its receptor. This interaction triggers the refolding of the transmembrane protein (TM) and is thought to activate its fusogenic potential by unmasking its fusion peptide. Fusion occurs at the host cell plasma membrane. Functionally, the transmembrane protein (TM) acts as a class I viral fusion protein. Under the current model, the protein has at least 3 conformational states: pre-fusion native state, pre-hairpin intermediate state, and post-fusion hairpin state. During viral and target cell membrane fusion, the coiled coil regions (heptad repeats) assume a trimer-of-hairpins structure, positioning the fusion peptide in close proximity to the C-terminal region of the ectodomain. The formation of this structure appears to drive apposition and subsequent fusion of viral and target cell membranes. Membranes fusion leads to delivery of the nucleocapsid into the cytoplasm. This Radiation murine leukemia virus protein is Envelope glycoprotein (env).